A 1405-amino-acid chain; its full sequence is Tonsoku-like protein (1405 aa).

TPR repeat units lie at residues 23 to 56 (AVSCNQLGDFYNQQGKYTDAVREYVQEAQIYASM), 63 to 96 (AKAKRMVGEMYTLLCDYDAAKDHINDYLKIAKRL), 163 to 196 (ARCYLNIGVVKEHMEAFQESIEYIDKAIKISKTH), 203 to 237 (HLCYISMSLLYICKKNDATAALRFCNMALEVAKRF), 245 to 278 (CETLITKAEILIKAGDFASAKQILTKAYKKNTPD), 314 to 347 (KGLYEKLGDGCCHLMNYEKALTYYQKMLENAELN), and 355 to 388 (VPIYVSLYQTYRDNGQFDKALEYLWKEFELNQDA). An LRR 1 repeat occupies 153–181 (ISKLEQLDMQARCYLNIGVVKEHMEAFQE). One copy of the LRR 2 repeat lies at 439 to 465 (MVRLRRLMLKHNMQVLVENLEADATAK). The segment at 465-535 (KGIDLDQEES…RGNRTLVIKK (71 aa)) is disordered. Residues 469 to 483 (LDQEESVGDDEEESD) show a composition bias toward acidic residues. ANK repeat units follow at residues 538–567 (KGETQLHQACISGNLELVRRLIDQGHTVNV), 571–600 (AGWLPLHEACNHGYREIVELLLDKGAASAI), and 609–638 (DGITPLFDACSNGFLDVAELLLDRGADATV). 3 disordered regions span residues 695 to 753 (FNAK…KEYR), 806 to 827 (KRINSGDLSRRTSKENFQDTAL), and 841 to 880 (TPENEYSQRQKQMRKLTLSRSSSMSSNHSSSATSSRKKHQ). Serine 707 and serine 709 each carry phosphoserine. Over residues 813–822 (LSRRTSKENF) the composition is skewed to basic and acidic residues. The span at 841–850 (TPENEYSQRQ) shows a compositional bias: polar residues. Positions 859 to 874 (SRSSSMSSNHSSSATS) are enriched in low complexity. Residues serine 893, serine 895, serine 899, and serine 902 each carry the phosphoserine modification. LRR repeat units lie at residues 1085 to 1108 (QARLTVLDLSCNFIGNEGCQQLAK), 1113 to 1137 (LLQLKALRLQCNAIGSHGLEALLCG), 1143 to 1166 (LELLEELNLNQNPLGNASVRILSK), 1186 to 1211 (LTELQDFDLGFNKLTRFDISFNQLTQ), 1287 to 1311 (AKQLQMLDISDNSNLSGTTLGYILD), and 1333 to 1357 (LQKLEQLKQLPRRLELTVDEQVFSM).

It belongs to the Tonsoku family.

It is found in the nucleus. It localises to the nucleoplasm. Its subcellular location is the chromosome. Functionally, histone reader involved in homologous recombination-mediated repair of double-strand breaks (DSBs) at stalled or collapsed replication forks. Specifically recognizes and binds histone H3.1. The polypeptide is Tonsoku-like protein (Drosophila melanogaster (Fruit fly)).